We begin with the raw amino-acid sequence, 466 residues long: ATP-dependent protease ATPase subunit HslU (466 aa).

ATP-binding positions include I18, 60 to 65 (GVGKTE), D279, E344, and R416.

It belongs to the ClpX chaperone family. HslU subfamily. As to quaternary structure, a double ring-shaped homohexamer of HslV is capped on each side by a ring-shaped HslU homohexamer. The assembly of the HslU/HslV complex is dependent on binding of ATP.

The protein resides in the cytoplasm. In terms of biological role, ATPase subunit of a proteasome-like degradation complex; this subunit has chaperone activity. The binding of ATP and its subsequent hydrolysis by HslU are essential for unfolding of protein substrates subsequently hydrolyzed by HslV. HslU recognizes the N-terminal part of its protein substrates and unfolds these before they are guided to HslV for hydrolysis. The sequence is that of ATP-dependent protease ATPase subunit HslU from Syntrophomonas wolfei subsp. wolfei (strain DSM 2245B / Goettingen).